Reading from the N-terminus, the 318-residue chain is MKKTANKVVLIGAGSVGTSFLYAAINQGIAEHYVLIDAFPQPAEGNALDLSDTLAVIPHSFTSIKAGSYEDCKDADVVVITAGRPQKPGETRLEMVAGNAEIMKNIATEVKKSGFDGITVIASNPVDVITHVYQKVTGFDPHKVIGSGTTLDSARLRRLVGQKLNVKPESVQAYVAGEHGDSSVAIWSQANIMGRPILDYVKCGCLTLEDLDQIQKDTVDMAYKIINLKRATFYGIGACLTKIVNAVLRDEKSTLMVGAQLNGEYKNKDLYTGVPAIIGSNGWERIIEWDLTKEEQEKFDKSCETLHKTIDSVKHLFE.

Residues Val-16, Asp-37, and Tyr-69 each coordinate NAD(+). Substrate is bound by residues Gln-86, Arg-92, and 124–127 (NPVD). Residues 122-124 (ASN) and Ser-147 contribute to the NAD(+) site. 152 to 155 (DSAR) is a binding site for substrate. The Proton acceptor role is filled by His-179. A Phosphotyrosine modification is found at Tyr-223. Thr-232 serves as a coordination point for substrate.

Belongs to the LDH/MDH superfamily. LDH family. As to quaternary structure, homotetramer.

The protein resides in the cytoplasm. It carries out the reaction (S)-lactate + NAD(+) = pyruvate + NADH + H(+). It participates in fermentation; pyruvate fermentation to lactate; (S)-lactate from pyruvate: step 1/1. Catalyzes the conversion of lactate to pyruvate. This is L-lactate dehydrogenase from Mycoplasma mycoides subsp. mycoides SC (strain CCUG 32753 / NCTC 10114 / PG1).